Consider the following 411-residue polypeptide: Histidine--tRNA ligase (411 aa).

Belongs to the class-II aminoacyl-tRNA synthetase family. Homodimer.

It is found in the cytoplasm. It carries out the reaction tRNA(His) + L-histidine + ATP = L-histidyl-tRNA(His) + AMP + diphosphate + H(+). The polypeptide is Histidine--tRNA ligase (Dictyoglomus turgidum (strain DSM 6724 / Z-1310)).